Here is a 74-residue protein sequence, read N- to C-terminus: Veswaprin-a (74 aa).

Residues Met1 to Gly24 form the signal peptide. Positions Arg27–Ile71 constitute a WAP domain. 4 disulfides stabilise this stretch: Cys34-Cys59, Cys42-Cys63, Cys46-Cys58, and Cys52-Cys67.

The protein belongs to the venom waprin family. Expressed by the venom gland.

The protein localises to the secreted. Damages membranes of susceptible bacteria. Has no hemolytic activity. Not toxic to mice. Does not inhibit the proteinases elastase and cathepsin G. This is Veswaprin-a from Demansia vestigiata (Lesser black whip snake).